The following is a 364-amino-acid chain: Methylthioribose-1-phosphate isomerase (364 aa).

Residues 49-51, arginine 89, and glutamine 201 each bind substrate; that span reads RGA. Catalysis depends on aspartate 242, which acts as the Proton donor. 252–253 serves as a coordination point for substrate; that stretch reads NK.

The protein belongs to the eIF-2B alpha/beta/delta subunits family. MtnA subfamily.

The catalysed reaction is 5-(methylsulfanyl)-alpha-D-ribose 1-phosphate = 5-(methylsulfanyl)-D-ribulose 1-phosphate. The protein operates within amino-acid biosynthesis; L-methionine biosynthesis via salvage pathway; L-methionine from S-methyl-5-thio-alpha-D-ribose 1-phosphate: step 1/6. Catalyzes the interconversion of methylthioribose-1-phosphate (MTR-1-P) into methylthioribulose-1-phosphate (MTRu-1-P). The sequence is that of Methylthioribose-1-phosphate isomerase from Leptospira interrogans serogroup Icterohaemorrhagiae serovar copenhageni (strain Fiocruz L1-130).